We begin with the raw amino-acid sequence, 49 residues long: MLRKAGLACTICGSRNYTLNLSSVAKEKRVEVKKFCRTCGKHTLHKETR.

It belongs to the bacterial ribosomal protein bL33 family.

This chain is Large ribosomal subunit protein bL33B (rpmG2), found in Lactococcus lactis subsp. lactis (strain IL1403) (Streptococcus lactis).